A 1306-amino-acid polypeptide reads, in one-letter code: Putative late blight resistance protein homolog R1A-10 (1306 aa).

Coiled coils occupy residues 407–428 and 520–542; these read SDSL…ESLQ and PRMK…KLLS. The 288-residue stretch at 521–808 folds into the NB-ARC domain; it reads RMKEEIVGFE…SEAFIKSSEG (288 aa). 554-561 is an ATP binding site; the sequence is GMPGLGKT. 11 LRR repeats span residues 858–881, 921–935, 936–961, 979–1007, 1010–1035, 1057–1081, 1082–1106, 1110–1129, 1130–1153, 1156–1181, and 1216–1240; these read AEEN…VYSH, LSSL…ILPN, FKFL…PYLR, LWNL…VWDM, LRHL…NLDD, TPNL…ALNF, PIRL…ISAP, YLKL…TADH, LKNL…KVSN, FPQL…AFPN, and ESVV…NFKL. The region spanning 1240-1306 is the HMA domain; sequence LVLIEKWPKF…KLRKCGMPGL (67 aa).

It belongs to the disease resistance NB-LRR family.

Its subcellular location is the cytoplasm. It localises to the membrane. In terms of biological role, confers resistance to late blight (Phytophthora infestans) races carrying the avirulence gene Avr1. Resistance proteins guard the plant against pathogens that contain an appropriate avirulence protein via an indirect interaction with this avirulence protein. That triggers a defense system including the hypersensitive response, which restricts the pathogen growth. This chain is Putative late blight resistance protein homolog R1A-10 (R1A-10), found in Solanum demissum (Wild potato).